The primary structure comprises 793 residues: E3 UFM1-protein ligase 1 (793 aa).

The interval 2–212 (AADWEEIRRL…INNLLNLYGF (211 aa)) is required for E3 UFM1-protein ligase activity. 2 disordered regions span residues 405–472 (ALLE…RNKL) and 745–793 (GAEK…SVTE). Gly residues predominate over residues 427–439 (EGGGSVKSGGGGN). The segment covering 767–781 (SLQRELHSLSRDIKD) has biased composition (basic and acidic residues).

It belongs to the UFL1 family. As to quaternary structure, catalytic component of the UFM1 ribosome E3 ligase (UREL) complex. Interacts with E2-like enzyme UFC1.

It is found in the endoplasmic reticulum membrane. The protein localises to the cytoplasm. Its subcellular location is the cytosol. The protein resides in the nucleus. It localises to the chromosome. Its function is as follows. E3 protein ligase that mediates ufmylation, the covalent attachment of the ubiquitin-like modifier UFM1 to lysine residues on target proteins, and which plays a key role in various processes, such as ribosome recycling, response to DNA damage, interferon response or reticulophagy (also called ER-phagy). As part of the UREL complex, plays a key role in ribosome recycling by catalyzing mono-ufmylation of RPL26/uL24 subunit of the 60S ribosome. Ufmylation of RPL26/uL24 occurs on free 60S ribosomes following ribosome dissociation: it weakens the junction between post-termination 60S subunits and SEC61 translocons, promoting release and recycling of the large ribosomal subunit from the endoplasmic reticulum membrane. Ufmylation of RPL26/uL24 and subsequent 60S ribosome recycling either take place after normal termination of translation or after ribosome stalling during cotranslational translocation at the endoplasmic reticulum. Involved in reticulophagy in response to endoplasmic reticulum stress by mediating ufmylation of proteins such as CYB5R3 and RPN1, thereby promoting lysosomal degradation of ufmylated proteins. Ufmylation in response to endoplasmic reticulum stress is essential for processes such as hematopoiesis, blood vessel morphogenesis or inflammatory response. The chain is E3 UFM1-protein ligase 1 from Danio rerio (Zebrafish).